Here is a 401-residue protein sequence, read N- to C-terminus: MSYTHRRSCISGLFLLLLALSCEANSGFIGVKDSHFELNGSPFLFNGFNSYWLMHVAADPAERYKVTEVLKDASTAGLSVCRTWAFSDGGDRALQISPGVYDERVFQGLDFVIAEAKKYGVRLILSFVNQWNDFGGKAEYVWWARNAGVQISNDDEFYTHPILKKYLKNHIEVVTRLNSITKVAYKDDATIMAWELMNEPRDQADYSGKTVNVGWVQEMASFVKSLDNKHLLEVGMEGFYGDSIPERKLVNPGYQVGTDFISNHLINEIDFATIHAYTDQWLSGQSDEAQLAWMEKWIRSHWEDARNILKKPLVLAEFGKSSRSGEGSRDIFMSSVYRNVYNLAKEGGTMGGSLVWQLMAHGMENYDDGYSIVLGLNPSTTQIISNQAHIMTALAHSLNHE.

Positions 1–24 are cleaved as a signal peptide; it reads MSYTHRRSCISGLFLLLLALSCEA. Substrate is bound by residues tryptophan 84 and asparagine 198. The Proton donor role is filled by glutamate 199. Tyrosine 277 is a binding site for substrate. Glutamate 317 acts as the Nucleophile in catalysis. Tryptophan 356 serves as a coordination point for substrate.

Belongs to the glycosyl hydrolase 5 (cellulase A) family.

The protein localises to the secreted. The enzyme catalyses Random hydrolysis of (1-&gt;4)-beta-D-mannosidic linkages in mannans, galactomannans and glucomannans.. The sequence is that of Mannan endo-1,4-beta-mannosidase 3 (MAN3) from Solanum lycopersicum (Tomato).